The sequence spans 141 residues: Endoribonuclease YbeY (141 aa).

Residues H101, H105, and H111 each coordinate Zn(2+).

This sequence belongs to the endoribonuclease YbeY family. It depends on Zn(2+) as a cofactor.

The protein resides in the cytoplasm. Single strand-specific metallo-endoribonuclease involved in late-stage 70S ribosome quality control and in maturation of the 3' terminus of the 16S rRNA. The polypeptide is Endoribonuclease YbeY (Nitrosomonas eutropha (strain DSM 101675 / C91 / Nm57)).